We begin with the raw amino-acid sequence, 205 residues long: Nuclear transcription factor Y subunit beta (205 aa).

Residues 1-50 (MDGDSSTTDASQLGIAGDYIGGSHYVIQPHDDTEDSMNDHEDTNGSKESF) form an a domain region. The tract at residues 24 to 50 (HYVIQPHDDTEDSMNDHEDTNGSKESF) is disordered. Residues 37–50 (MNDHEDTNGSKESF) are compositionally biased toward basic and acidic residues. The tract at residues 51–140 (REQDIYLPIA…PLKLYLQKFR (90 aa)) is b domain. A DNA-binding region spans residues 57-63 (LPIANVA). The segment at 84–95 (VQECVSEFISFI) is subunit association domain (SAD). Residues 141-201 (EAMKGEKGIG…SYQQISGVQQ (61 aa)) form a c domain region.

It belongs to the NFYB/HAP3 subunit family. In terms of assembly, heterotrimeric transcription factor composed of three components, NF-YA, NF-YB and NF-YC. NF-YB and NF-YC must interact and dimerize for NF-YA association and DNA binding.

The protein localises to the nucleus. Its function is as follows. Component of the sequence-specific heterotrimeric transcription factor (NF-Y) which specifically recognizes a 5'-CCAAT-3' box motif found in the promoters of its target genes. NF-Y can function as both an activator and a repressor, depending on its interacting cofactors. This chain is Nuclear transcription factor Y subunit beta (NFYB), found in Gallus gallus (Chicken).